We begin with the raw amino-acid sequence, 142 residues long: gSG7 salivary protein (142 aa).

The signal sequence occupies residues 1-26 (MAVRMTVILPLAMALICLMQAEPATA). 2 disulfide bridges follow: Cys84-Cys139 and Cys107-Cys117.

As to quaternary structure, associates with activated host C3-convertase complex C3bBb (C3-CFB). Interacts with host properdin (CFP), a regulator of the alternate pathway of complement. As to expression, female salivary gland (at protein level).

Its subcellular location is the secreted. Salivary protein that potently inhibits the alternative pathway of complement system activation in the host while having no inhibitory effect on the classical or lectin pathways. Binds and stabilizes activated host C3-convertase complex C3bBb (C3-CFB) and inhibits its convertase activity. Enhances accumulation of C3bBb on immobilized properdin. This chain is gSG7 salivary protein, found in Anopheles albimanus (New world malaria mosquito).